Here is a 107-residue protein sequence, read N- to C-terminus: Glutaredoxin 4 (107 aa).

Positions 4 to 106 (IDKIKQQINE…TLLKETATKH (103 aa)) constitute a Glutaredoxin domain. Lys21 provides a ligand contact to glutathione. Cys29 serves as a coordination point for [2Fe-2S] cluster. Residues Arg58, Phe70, and 83-84 (CD) contribute to the glutathione site.

It belongs to the glutaredoxin family. Monothiol subfamily. In terms of assembly, homodimer.

Its subcellular location is the cytoplasm. Its function is as follows. Monothiol glutaredoxin involved in the biogenesis of iron-sulfur clusters. The chain is Glutaredoxin 4 (grxD) from Haemophilus ducreyi (strain 35000HP / ATCC 700724).